We begin with the raw amino-acid sequence, 352 residues long: Mannonate dehydratase (352 aa).

This sequence belongs to the mannonate dehydratase family. Requires Fe(2+) as cofactor. Mn(2+) serves as cofactor.

It catalyses the reaction D-mannonate = 2-dehydro-3-deoxy-D-gluconate + H2O. It participates in carbohydrate metabolism; pentose and glucuronate interconversion. Catalyzes the dehydration of D-mannonate. This Paraburkholderia phytofirmans (strain DSM 17436 / LMG 22146 / PsJN) (Burkholderia phytofirmans) protein is Mannonate dehydratase.